Consider the following 435-residue polypeptide: Tol-Pal system protein TolB (435 aa).

Residues 1–26 form the signal peptide; it reads MKTFSLLRILIVLVGMAGAFATPAMA.

Belongs to the TolB family. In terms of assembly, the Tol-Pal system is composed of five core proteins: the inner membrane proteins TolA, TolQ and TolR, the periplasmic protein TolB and the outer membrane protein Pal. They form a network linking the inner and outer membranes and the peptidoglycan layer.

Its subcellular location is the periplasm. In terms of biological role, part of the Tol-Pal system, which plays a role in outer membrane invagination during cell division and is important for maintaining outer membrane integrity. This is Tol-Pal system protein TolB from Allorhizobium ampelinum (strain ATCC BAA-846 / DSM 112012 / S4) (Agrobacterium vitis (strain S4)).